The sequence spans 160 residues: Major pollen allergen Bet v 1-E (160 aa).

Positions 55, 82, 84, and 101 each coordinate brassinolide.

This sequence belongs to the BetVI family.

It localises to the cytoplasm. Functionally, may be a general steroid carrier protein. The polypeptide is Major pollen allergen Bet v 1-E (BETV1E) (Betula pendula (European white birch)).